The chain runs to 317 residues: Aspartate carbamoyltransferase catalytic subunit (317 aa).

Residues Arg-64 and Thr-65 each coordinate carbamoyl phosphate. Position 92 (Lys-92) interacts with L-aspartate. Carbamoyl phosphate contacts are provided by Arg-114, His-144, and Gln-147. L-aspartate-binding residues include Arg-177 and Arg-232. Residues Gly-273 and Pro-274 each coordinate carbamoyl phosphate.

Belongs to the aspartate/ornithine carbamoyltransferase superfamily. ATCase family. In terms of assembly, heterododecamer (2C3:3R2) of six catalytic PyrB chains organized as two trimers (C3), and six regulatory PyrI chains organized as three dimers (R2).

The enzyme catalyses carbamoyl phosphate + L-aspartate = N-carbamoyl-L-aspartate + phosphate + H(+). The protein operates within pyrimidine metabolism; UMP biosynthesis via de novo pathway; (S)-dihydroorotate from bicarbonate: step 2/3. Functionally, catalyzes the condensation of carbamoyl phosphate and aspartate to form carbamoyl aspartate and inorganic phosphate, the committed step in the de novo pyrimidine nucleotide biosynthesis pathway. This is Aspartate carbamoyltransferase catalytic subunit from Thiobacillus denitrificans (strain ATCC 25259 / T1).